We begin with the raw amino-acid sequence, 1166 residues long: MKRAFVTVGTTSFDELVARVVANDCVQILESLGYNHLVLQVGRGTVVPKPFRTESFTLDVYRYKDSLKEDLQQADLVISHAGAGSCLESLEKGKPLVVVVNEKLMNNHQFELAKQLHKEGHLFYCTCRVLSCPAPVSLLLVLLGSAKILQQLPSATLSCFGYLPTQAPVLVATAYSYLHSVFSSFPPLSTFLIIPCTMQKGWKKYCGQKSLNEASMDEYLGSLGLFRKVVAKDASCLFRAISEQLFHSQIHHLQIRRACVSYMKENQQAFESYVEGSFEKYLERLGDPKESAGQLELKALSLIYNRDFIIYRYPGKPPTQVTDNGFEDKIILCYSNNGHYDSVYSKEFQSTAGICQAILYELLYKDVFVVDEETLKTAVDLFRSGSRRNKHHALTASVEGSSDQKSSTEDRTEEAAACSSAASTPEGNKQGTERQKVPESPSKMLFPYKVLKALDPEIYRNVEFDAWLDSRKELQKSECVEYGGRYYFLGDKCQVCMESGGKYYNAHIQEIDNDKSSVVVFIEEFAERHSIPLAHVRPVNQVALLPSWNAIPIRNGRGYPTITGGYFPEIVMTDMNMKQRKKMFKKFRGKEIYMTMAYSRGDPLVPSRIQHSMHYGHDPLLYYSQTAGHILSSQHFYPQHSSQRQGRGYGMPRDSSHLISKQNLPNPKVGFCSGSGRKCCQSYDNVSYRSRSFRRSHRQMHCMNKGCQYGFAPENGVEETVTFYALEEGNETAYSTLPNNGGPTTMVPATSGYCVARQGYNSCKPPLNSGDSNDHCDNGGYHGDYLYSSEQGYETSSVYTTTVSTANLSLQDSGPSSVPQDTVTSYNYPQKVLENSAAIAVSWASHVPVPVIPNCAGDNEALRTSDISSQNAIQPGFVPPPAQGSPAYLEPSAAGAAGAAAAAAAAAAPVATPVAAPLPLPPPLPPPPPATLEAGDASGFPLPPPPPPPPPPPPPYSYDPSGSDLPQDTKVLQYYFNLGLQCYHHNYWHPMVYMPHVQQQLQPQPQPQPQPQPQPQPQPQPQPQQPQQQQPPPQQQQQQQEQVHGESYPDCTEQPLVDQSAPQVYSDVVREDGTQADVSTNDTFPIADAVPLPHGAVYYPVMTDPYGSPLLGFDSYVPVASDYSSIAMWHPVNAACGASAQIHGAMNPGPIGYMLLPNSPHYTPQN.

The segment at 1–125 (MKRAFVTVGT…LHKEGHLFYC (125 aa)) is glycosyltransferase activity. The deubiquitinase activity stretch occupies residues 126-394 (TCRVLSCPAP…GSRRNKHHAL (269 aa)). Positions 225-346 (LFRKVVAKDA…NGHYDSVYSK (122 aa)) constitute an OTU domain. Residue Asp-233 is the For deubiquitinase activity of the active site. Cys-236 (nucleophile; for deubiquitinase activity) is an active-site residue. Catalysis depends on His-339, which acts as the For deubiquitinase activity. The segment at 393 to 438 (ALTASVEGSSDQKSSTEDRTEEAAACSSAASTPEGNKQGTERQKVP) is disordered. The 61-residue stretch at 486-546 (YYFLGDKCQV…RPVNQVALLP (61 aa)) folds into the Tudor domain. Pro residues-rich tracts occupy residues 921–930 (PPPLPPPPPA), 941–957 (PLPPPPPPPPPPPPPYS), and 1004–1034 (QPQPQPQPQPQPQPQPQPQPQQPQQQQPPPQ). Disordered stretches follow at residues 921-966 (PPPL…SDLP) and 998-1056 (QQQL…EQPL).

It belongs to the glycosyltransferase 28 family. Forms with ALG14 the active heterodimeric UDP-N-acetylglucosamine transferase complex. As to quaternary structure, not able to interact with ALG14 to form an active UDP-N-acetylglucosamine transferase complex.

Its subcellular location is the endoplasmic reticulum membrane. The enzyme catalyses an N-acetyl-alpha-D-glucosaminyl-diphospho-di-trans,poly-cis-dolichol + UDP-N-acetyl-alpha-D-glucosamine = an N,N'-diacetylchitobiosyl-diphospho-di-trans,poly-cis-dolichol + UDP + H(+). It functions in the pathway protein modification; protein glycosylation. Catalytic subunit of the UDP-N-acetylglucosamine transferase complex that operates in the biosynthetic pathway of dolichol-linked oligosaccharides, the glycan precursors employed in protein asparagine (N)-glycosylation. The assembly of dolichol-linked oligosaccharides begins on the cytosolic side of the endoplasmic reticulum membrane and finishes in its lumen. The sequential addition of sugars to dolichol pyrophosphate produces dolichol-linked oligosaccharides containing fourteen sugars, including two GlcNAcs, nine mannoses and three glucoses. Once assembled, the oligosaccharide is transferred from the lipid to nascent proteins by oligosaccharyltransferases. On the cytoplasmic face of the endoplasmic reticulum, the dimeric ALG13/ALG14 complex catalyzes the second step of dolichol pyrophosphate biosynthesis, transferring a beta1,4-linked N-acetylglucosamine (GlcNAc) from UDP-GlcNAc to GlcNAc-pyrophosphatedolichol (Gn-PDol) to produce N,N'-diacetylchitobiosyl diphosphodolichol. N,N'-diacetylchitobiosyl diphosphodolichol is a substrate for ALG1, the following enzyme in the biosynthetic pathway. Functionally, no glycosyltransferase or deubiquitinase activity is detected for this potential multifunctional enzyme. The polypeptide is UDP-N-acetylglucosamine transferase subunit ALG13 (Mus musculus (Mouse)).